Consider the following 315-residue polypeptide: Zinc transport protein ZntB (315 aa).

At 1-250 (MGFMIEHWDF…RDEKTNKNSY (250 aa)) the chain is on the cytoplasmic side. Residues 251–271 (LFTLVATIFLPTSFLTGLLGI) traverse the membrane as a helical segment. The Periplasmic portion of the chain corresponds to 272–282 (NIGGMPGVESS). Residues 283 to 303 (MAFTWFCIALIVIFGLEWLLF) traverse the membrane as a helical segment. At 304 to 315 (KRLGFTNKTDDE) the chain is on the cytoplasmic side.

It belongs to the CorA metal ion transporter (MIT) (TC 1.A.35) family. In terms of assembly, homopentamer. Can assemble pentamers in the absence of the transmembrane regions.

The protein resides in the cell inner membrane. It catalyses the reaction Zn(2+)(out) + H(+)(out) = Zn(2+)(in) + H(+)(in). In terms of biological role, zinc transporter. Acts as a Zn(2+):proton symporter, which likely mediates zinc ion uptake. This is Zinc transport protein ZntB from Vibrio parahaemolyticus serotype O3:K6 (strain RIMD 2210633).